Here is a 365-residue protein sequence, read N- to C-terminus: MKKLTVAISAVAASVLMAMSAQAAEIYNKDSNKLDLYGKVNAKHYFSSNDADDGDTTYARLGFKGETQINDQLTGFGQWEYEFKGNRAESQGSSKDKTHLAFAGLKFGDYGSIDYGRNYGVAYDIGAWTDVLPEFGGDTWTQTDVFMTGRTTGFATYRNNDFFGLVDGLNFAAQYQGKNDRSDFDNYTEGNGDGFGFSATYEYEGFGIGATYAKSDRTDTQVNAGKVLPEVFASGKNAEVWAAGLKYDANNIYLATTYSETQNMTVFADHFVANKAQNFEAVAQYQFDFGLRPSVAYLQSKGKDLGVWGDQDLVKYVDVGATYYFNKNMSTFVDYKINLLDKNDFTKALGVSTDDIVAVGLVYQF.

The N-terminal stretch at 1-23 (MKKLTVAISAVAASVLMAMSAQA) is a signal peptide.

This sequence belongs to the Gram-negative porin family. Homotrimer.

The protein resides in the host cell outer membrane. Forms pores that allow passive diffusion of small molecules across the host cell outer membrane. The sequence is that of Outer membrane porin protein LC (LC) from Enterobacteria phage PA-2 (Bacteriophage PA-2).